The primary structure comprises 86 residues: Myosin light chain alkali (86 aa).

The EF-hand domain occupies 11-46; that stretch reads GCYEDFIECLKLYDKEENGTMMLAELQHALLALGES.

Myosin is a hexamer of 2 heavy chains and 4 light chains.

The sequence is that of Myosin light chain alkali (Mlc1) from Drosophila subobscura (Fruit fly).